Consider the following 97-residue polypeptide: Co-chaperonin GroES (97 aa).

This sequence belongs to the GroES chaperonin family. Heptamer of 7 subunits arranged in a ring. Interacts with the chaperonin GroEL.

It localises to the cytoplasm. Functionally, together with the chaperonin GroEL, plays an essential role in assisting protein folding. The GroEL-GroES system forms a nano-cage that allows encapsulation of the non-native substrate proteins and provides a physical environment optimized to promote and accelerate protein folding. GroES binds to the apical surface of the GroEL ring, thereby capping the opening of the GroEL channel. This Pectobacterium carotovorum subsp. carotovorum (strain PC1) protein is Co-chaperonin GroES.